A 197-amino-acid polypeptide reads, in one-letter code: Casparian strip membrane protein 4 (197 aa).

Topologically, residues Met-1–Lys-34 are cytoplasmic. The chain crosses the membrane as a helical span at residues Gly-35–Ala-55. Residues Thr-56 to Gln-85 are Extracellular-facing. A helical transmembrane segment spans residues Phe-86–Ile-106. Residues Val-107–Lys-118 are Cytoplasmic-facing. The chain crosses the membrane as a helical span at residues Leu-119–Ala-139. Over Ala-140 to Gly-171 the chain is Extracellular. A helical transmembrane segment spans residues Ala-172–Leu-192. Residues Ala-193–His-197 lie on the Cytoplasmic side of the membrane.

It belongs to the Casparian strip membrane proteins (CASP) family. As to quaternary structure, homodimer and heterodimers.

Its subcellular location is the cell membrane. Functionally, regulates membrane-cell wall junctions and localized cell wall deposition. Required for establishment of the Casparian strip membrane domain (CSD) and the subsequent formation of Casparian strips, a cell wall modification of the root endodermis that determines an apoplastic barrier between the intraorganismal apoplasm and the extraorganismal apoplasm and prevents lateral diffusion. The chain is Casparian strip membrane protein 4 from Lotus japonicus (Lotus corniculatus var. japonicus).